The chain runs to 450 residues: Glucose-6-phosphate isomerase (450 aa).

A Phosphothreonine modification is found at T39. Catalysis depends on E291, which acts as the Proton donor. Residues H312 and K426 contribute to the active site.

It belongs to the GPI family.

It localises to the cytoplasm. The catalysed reaction is alpha-D-glucose 6-phosphate = beta-D-fructose 6-phosphate. Its pathway is carbohydrate biosynthesis; gluconeogenesis. The protein operates within carbohydrate degradation; glycolysis; D-glyceraldehyde 3-phosphate and glycerone phosphate from D-glucose: step 2/4. In terms of biological role, catalyzes the reversible isomerization of glucose-6-phosphate to fructose-6-phosphate. The polypeptide is Glucose-6-phosphate isomerase (Bacillus thuringiensis (strain Al Hakam)).